Consider the following 207-residue polypeptide: Dephospho-CoA kinase (207 aa).

Residues 10-207 (ILGLTGGIGS…FYLTLRGGQS (198 aa)) form the DPCK domain. Residue 18-23 (GSGKSA) participates in ATP binding.

This sequence belongs to the CoaE family.

The protein resides in the cytoplasm. The enzyme catalyses 3'-dephospho-CoA + ATP = ADP + CoA + H(+). The protein operates within cofactor biosynthesis; coenzyme A biosynthesis; CoA from (R)-pantothenate: step 5/5. Catalyzes the phosphorylation of the 3'-hydroxyl group of dephosphocoenzyme A to form coenzyme A. This chain is Dephospho-CoA kinase, found in Pseudomonas syringae pv. syringae (strain B728a).